The chain runs to 330 residues: MESTNKTWTELMTPLSQFWLESSSQAWKNWFDLMAKGGAGAMMGSAPQSFESLPQQFLQSQQFYGELLKLSFEAWQSLWPKLDNGSAPGAVQGYLKQLQTQIEQYTATTQALQGDMDGLWQCYIKEVQRFSQLWLSTWQSSVAPLGKLPTGDIHAWLDLNNLYGDALYNKNLSSFMRSPLLGPSREMNGKLLRAFDDWVKLSQAMADYQLLEADIQYRGFAALMEDLLARAKEDKPVKTWKEFQQRWAIAADQVFEEAFCEEKNLKVRGKFINALNRYRIQQQEILEAWLKMLNLPTRSEVDEIHQTIYQLRKEVKSLKKRLGETEANPG.

Residues 298-328 are a coiled coil; the sequence is RSEVDEIHQTIYQLRKEVKSLKKRLGETEAN.

This sequence belongs to the PHA/PHB synthase family. Type III PhaE subfamily. Forms a heterodimer with PhaC, which may multimerize in the presence of 3-hydroxybutyryl-CoA. Both subunits are required for PHB synthesis in E.coli and in PHA-negative A.eutrophus.

Its subcellular location is the cytoplasm. The protein operates within biopolymer metabolism; poly-(R)-3-hydroxybutanoate biosynthesis. Its function is as follows. When expressed in E.coli with Synechocystis PhaC and C.necator PhaA and PhaB, confers the ability to synthesize up to 13% (w/w) poly(3-hydroxybutyrate) (PHB) depending on the carbon source; all 4 genes are necessary for PHB production. Cell-free in vitro coexpression with PhaE gives a heterodimer able to polymerize 3-hydroxybutyrate-CoA. This subunit has no catalytic activity but enhances the activity of PhaC, the catalytic subunit. The protein is Poly(3-hydroxyalkanoate) polymerase subunit PhaE of Synechocystis sp. (strain ATCC 27184 / PCC 6803 / Kazusa).